A 504-amino-acid polypeptide reads, in one-letter code: Histidine ammonia-lyase (504 aa).

The segment at residues 141–143 is a cross-link (5-imidazolinone (Ala-Gly)); sequence ASG. At Ser-142 the chain carries 2,3-didehydroalanine (Ser).

This sequence belongs to the PAL/histidase family. Contains an active site 4-methylidene-imidazol-5-one (MIO), which is formed autocatalytically by cyclization and dehydration of residues Ala-Ser-Gly.

The protein resides in the cytoplasm. The enzyme catalyses L-histidine = trans-urocanate + NH4(+). The protein operates within amino-acid degradation; L-histidine degradation into L-glutamate; N-formimidoyl-L-glutamate from L-histidine: step 1/3. The chain is Histidine ammonia-lyase from Geobacillus kaustophilus (strain HTA426).